A 270-amino-acid chain; its full sequence is NAD kinase (270 aa).

Aspartate 45 (proton acceptor) is an active-site residue. Residues 45 to 46 (DG), 121 to 122 (NE), lysine 147, aspartate 149, 160 to 165 (TAYSKS), and alanine 184 contribute to the NAD(+) site.

The protein belongs to the NAD kinase family. A divalent metal cation serves as cofactor.

It localises to the cytoplasm. It catalyses the reaction NAD(+) + ATP = ADP + NADP(+) + H(+). Its function is as follows. Involved in the regulation of the intracellular balance of NAD and NADP, and is a key enzyme in the biosynthesis of NADP. Catalyzes specifically the phosphorylation on 2'-hydroxyl of the adenosine moiety of NAD to yield NADP. The protein is NAD kinase of Lactobacillus johnsonii (strain CNCM I-12250 / La1 / NCC 533).